Here is a 21-residue protein sequence, read N- to C-terminus: Hemocyanin subunit 6 (21 aa).

This sequence belongs to the tyrosinase family. Hemocyanin subfamily. As to expression, hemolymph.

The protein localises to the secreted. The protein resides in the extracellular space. Functionally, hemocyanins are copper-containing oxygen carriers occurring freely dissolved in the hemolymph of many mollusks and arthropods. The protein is Hemocyanin subunit 6 of Maja squinado (Mediterranean spider crab).